A 715-amino-acid polypeptide reads, in one-letter code: Lactococcin transport/processing ATP-binding protein LcnC-like (715 aa).

The Peptidase C39 domain occupies 11–138 (QVDEMDCGCA…SEWTGISLFL (128 aa)). Cys-17 is a catalytic residue. Transmembrane regions (helical) follow at residues 167–187 (VILN…LGSY), 197–217 (IPNA…LTYI), 237–257 (LAID…MSFF), 282–302 (TILS…ILGL), and 307–327 (LFLL…IFTP). The ABC transmembrane type-1 domain maps to 168 to 450 (ILNIVIASFI…IINLQTKLQK (283 aa)). Residues 482 to 715 (LNMSEISYQY…NGFYAQLYHN (234 aa)) enclose the ABC transporter domain. 515–522 (GISGSGKS) is an ATP binding site.

It belongs to the ABC transporter superfamily. HlyB family.

The protein resides in the cell membrane. Involved in the export process of a bacteriocin lactococcin. This Lactococcus lactis subsp. lactis (strain IL1403) (Streptococcus lactis) protein is Lactococcin transport/processing ATP-binding protein LcnC-like (lcnC).